The primary structure comprises 223 residues: Deoxyribose-phosphate aldolase (223 aa).

Asp-89 acts as the Proton donor/acceptor in catalysis. Residue Lys-152 is the Schiff-base intermediate with acetaldehyde of the active site. Lys-181 serves as the catalytic Proton donor/acceptor.

Belongs to the DeoC/FbaB aldolase family. DeoC type 1 subfamily.

The protein resides in the cytoplasm. It carries out the reaction 2-deoxy-D-ribose 5-phosphate = D-glyceraldehyde 3-phosphate + acetaldehyde. Its pathway is carbohydrate degradation; 2-deoxy-D-ribose 1-phosphate degradation; D-glyceraldehyde 3-phosphate and acetaldehyde from 2-deoxy-alpha-D-ribose 1-phosphate: step 2/2. Catalyzes a reversible aldol reaction between acetaldehyde and D-glyceraldehyde 3-phosphate to generate 2-deoxy-D-ribose 5-phosphate. The sequence is that of Deoxyribose-phosphate aldolase from Bacillus cereus (strain ATCC 14579 / DSM 31 / CCUG 7414 / JCM 2152 / NBRC 15305 / NCIMB 9373 / NCTC 2599 / NRRL B-3711).